A 427-amino-acid polypeptide reads, in one-letter code: Tyrosine--tRNA ligase (427 aa).

Tyr-33 contributes to the L-tyrosine binding site. A 'HIGH' region motif is present at residues 38–47 (PTAPSLHVGN). Residues Tyr-168 and Gln-172 each contribute to the L-tyrosine site. Positions 228–232 (KFGKS) match the 'KMSKS' region motif. Lys-231 contributes to the ATP binding site. The S4 RNA-binding domain occupies 358–426 (EHMLDLVAST…GKKHHYLIKV (69 aa)).

The protein belongs to the class-I aminoacyl-tRNA synthetase family. TyrS type 1 subfamily. In terms of assembly, homodimer.

Its subcellular location is the cytoplasm. It catalyses the reaction tRNA(Tyr) + L-tyrosine + ATP = L-tyrosyl-tRNA(Tyr) + AMP + diphosphate + H(+). Its function is as follows. Catalyzes the attachment of tyrosine to tRNA(Tyr) in a two-step reaction: tyrosine is first activated by ATP to form Tyr-AMP and then transferred to the acceptor end of tRNA(Tyr). This is Tyrosine--tRNA ligase from Amoebophilus asiaticus (strain 5a2).